Here is a 394-residue protein sequence, read N- to C-terminus: Methylthioribose kinase (394 aa).

ATP-binding positions include Asn44, Lys61, and 115–117 (EDL). Asp233 is a substrate binding site. 250-252 (DPE) contributes to the ATP binding site. Arg337 provides a ligand contact to substrate.

Belongs to the methylthioribose kinase family. As to quaternary structure, homodimer.

It carries out the reaction 5-(methylsulfanyl)-D-ribose + ATP = 5-(methylsulfanyl)-alpha-D-ribose 1-phosphate + ADP + H(+). Its pathway is amino-acid biosynthesis; L-methionine biosynthesis via salvage pathway; S-methyl-5-thio-alpha-D-ribose 1-phosphate from S-methyl-5'-thioadenosine (hydrolase route): step 2/2. Functionally, catalyzes the phosphorylation of methylthioribose into methylthioribose-1-phosphate. The polypeptide is Methylthioribose kinase (Bacillus velezensis (strain DSM 23117 / BGSC 10A6 / LMG 26770 / FZB42) (Bacillus amyloliquefaciens subsp. plantarum)).